The primary structure comprises 99 residues: Small ribosomal subunit protein eS24 (99 aa).

The protein belongs to the eukaryotic ribosomal protein eS24 family.

This chain is Small ribosomal subunit protein eS24, found in Pyrococcus horikoshii (strain ATCC 700860 / DSM 12428 / JCM 9974 / NBRC 100139 / OT-3).